The following is a 257-amino-acid chain: Very long chain fatty acid elongase F (257 aa).

The next 7 membrane-spanning stretches (helical) occupy residues 10–30 (IPVV…LLFV), 55–75 (IFQI…LFVL), 98–118 (LICT…IFFV), 135–155 (FAMA…GVAF), 158–178 (CLLN…SSIS), 191–211 (ITIA…ITLA), and 221–241 (LTYG…QFYY).

This sequence belongs to the ELO family. Highly expressed in females. Little or no expression detected in males.

It is found in the endoplasmic reticulum membrane. It carries out the reaction a very-long-chain acyl-CoA + malonyl-CoA + H(+) = a very-long-chain 3-oxoacyl-CoA + CO2 + CoA. It participates in lipid metabolism; fatty acid biosynthesis. Functionally, condensing enzyme that elongates saturated and monounsaturated very long chain fatty acids, to yield products up to 30 carbons in length. May also elongate diunsaturated fatty acids. Important for courtship behavior where it probably has a role in female pheromone biosynthesis. This is Very long chain fatty acid elongase F from Drosophila melanogaster (Fruit fly).